The sequence spans 336 residues: Fructose-1,6-bisphosphatase class 1 (336 aa).

Glu-90, Asp-112, Leu-114, and Asp-115 together coordinate Mg(2+). Residues 115-118 (DGSS), Asn-211, and Lys-277 each bind substrate. Mg(2+) is bound at residue Glu-283.

This sequence belongs to the FBPase class 1 family. As to quaternary structure, homotetramer. Requires Mg(2+) as cofactor.

It is found in the cytoplasm. The enzyme catalyses beta-D-fructose 1,6-bisphosphate + H2O = beta-D-fructose 6-phosphate + phosphate. Its pathway is carbohydrate biosynthesis; gluconeogenesis. This is Fructose-1,6-bisphosphatase class 1 from Pseudomonas putida (strain GB-1).